A 725-amino-acid chain; its full sequence is IML2-like protein SCY_3392 (725 aa).

Thr-196 carries the post-translational modification Phosphothreonine. Residues Ser-246, Ser-377, and Ser-380 each carry the phosphoserine modification.

It belongs to the IML2 family.

The protein localises to the cytoplasm. It localises to the nucleus. Functionally, may be involved in mitochondrial DNA stability. This chain is IML2-like protein SCY_3392, found in Saccharomyces cerevisiae (strain YJM789) (Baker's yeast).